The primary structure comprises 218 residues: Embryonic polyadenylate-binding protein 2-B (218 aa).

Disordered regions lie at residues 1 to 24 (MSER…ELDD) and 169 to 218 (RTNM…NNPY). Residues 93 to 170 (RSVYVGNVDY…RTIKVLPKRT (78 aa)) enclose the RRM domain. The segment covering 198 to 209 (QRPRGRPFRGRG) has biased composition (basic residues).

As to quaternary structure, homodimer; Upon poly(A) binding, undergoes a dimer-monomer transition that removes the polyproline motif from the RNA recognition site and allows it to be replaced by the adenosine nucleotides of poly(A).

It localises to the cytoplasm. In terms of biological role, binds the poly(A) tail of mRNA. Unable to interact with the cap-binding complex and is therefore unlikely to be involved in translation initiation. The polypeptide is Embryonic polyadenylate-binding protein 2-B (Pabpn1l-b) (Xenopus laevis (African clawed frog)).